A 247-amino-acid polypeptide reads, in one-letter code: Small ribosomal subunit protein uS2 (247 aa).

Belongs to the universal ribosomal protein uS2 family.

In Fusobacterium nucleatum subsp. nucleatum (strain ATCC 25586 / DSM 15643 / BCRC 10681 / CIP 101130 / JCM 8532 / KCTC 2640 / LMG 13131 / VPI 4355), this protein is Small ribosomal subunit protein uS2.